Reading from the N-terminus, the 132-residue chain is Agouti-signaling protein (132 aa).

A signal peptide spans 1–22 (MDVTRLLLATLLVFLCFFTAYS). A glycan (N-linked (GlcNAc...) asparagine) is linked at N39. A disordered region spans residues 58–88 (KSKQMSRKEAEKKRSSKKEASMKKVARPRTP). Over residues 63 to 79 (SRKEAEKKRSSKKEASM) the composition is skewed to basic and acidic residues. 5 cysteine pairs are disulfide-bonded: C93-C108, C100-C114, C107-C125, C111-C132, and C116-C123. Residues 93-132 (CVATRDSCKPPAPACCDPCASCQCRFFRSACSCRVLSLNC) form the Agouti domain.

The protein resides in the secreted. Involved in the regulation of melanogenesis. The binding of ASP to MC1R precludes alpha-MSH initiated signaling and thus blocks production of cAMP, leading to a down-regulation of eumelanogenesis (brown/black pigment) and thus increasing synthesis of pheomelanin (yellow/red pigment). The polypeptide is Agouti-signaling protein (ASIP) (Cercopithecus mitis (Blue monkey)).